The sequence spans 210 residues: MTKVAKKIAKDLLDIEAVFLNPNEPFTWASGIKSPIYCDNRITMSYPAVRKEIAEGLAAKIKETFPEVEVIAGTATAGIPHAAWVADILGLPMVYIRSKAKDHGKGNQIEGRISEGQKMVVIEDLISTGGSVLEAAEAAEREGATVLGVAAIFTYELPKGTANFADKQMTLLTLTNYSTLIDAALEANYIEEKDVTLLQEWKKDPENWGK.

5-phospho-alpha-D-ribose 1-diphosphate-binding positions include Arg-97, Lys-101, His-103, and 123–131 (EDLISTGGS). Ser-127 serves as a coordination point for orotate.

This sequence belongs to the purine/pyrimidine phosphoribosyltransferase family. PyrE subfamily. In terms of assembly, homodimer. The cofactor is Mg(2+).

It catalyses the reaction orotidine 5'-phosphate + diphosphate = orotate + 5-phospho-alpha-D-ribose 1-diphosphate. It functions in the pathway pyrimidine metabolism; UMP biosynthesis via de novo pathway; UMP from orotate: step 1/2. Its function is as follows. Catalyzes the transfer of a ribosyl phosphate group from 5-phosphoribose 1-diphosphate to orotate, leading to the formation of orotidine monophosphate (OMP). This Enterococcus faecalis (strain ATCC 700802 / V583) protein is Orotate phosphoribosyltransferase.